A 370-amino-acid polypeptide reads, in one-letter code: MVSITEQTAILAKYLDLSQNGKVLAEYVWIDADGNSRSKCKTLDKKPSSVEDLPEWNFDGSSTGQAPGHDSDVYLRPVAFYADPFRKGDNIIVLTECWNNDGTPNKFNHRHESAKLMKAHADEEVWFGLEQEYTLFDQFDQPYAWPKGGFPAPQGPYYCGVGTGKVYARDLIEAHYRACLHAGVDISGINAEVMPSQWEFQVGPCEGIQMGDELWIARYLLQRVAEEFGVKVSFHPKPLKGEWNGAGCHTNVSTKSMRLPGGMKSIEVALSKLAKRHKEHMLLYGADNDQRLTGRHETASIEGFSSGVANRGASVRIPRSVAKEGYGYFEDRRPASNIDPYLVTGIMVETICGSIPDADMFKEYARESSD.

The 80-residue stretch at 23–102 (VLAEYVWIDA…VLTECWNNDG (80 aa)) folds into the GS beta-grasp domain. The segment at 40 to 69 (CKTLDKKPSSVEDLPEWNFDGSSTGQAPGH) is disordered. Positions 109-370 (HRHESAKLMK…FKEYARESSD (262 aa)) constitute a GS catalytic domain.

It belongs to the glutamine synthetase family. As to quaternary structure, homooctamer.

It localises to the cytoplasm. It carries out the reaction L-glutamate + NH4(+) + ATP = L-glutamine + ADP + phosphate + H(+). The chain is Glutamine synthetase (GLN1) from Debaryomyces hansenii (strain ATCC 36239 / CBS 767 / BCRC 21394 / JCM 1990 / NBRC 0083 / IGC 2968) (Yeast).